The following is a 267-amino-acid chain: Hydroxyethylthiazole kinase 2 (267 aa).

Met-41 contacts substrate. Positions 116 and 166 each coordinate ATP. Gly-193 is a binding site for substrate.

Belongs to the Thz kinase family. Requires Mg(2+) as cofactor.

The enzyme catalyses 5-(2-hydroxyethyl)-4-methylthiazole + ATP = 4-methyl-5-(2-phosphooxyethyl)-thiazole + ADP + H(+). It functions in the pathway cofactor biosynthesis; thiamine diphosphate biosynthesis; 4-methyl-5-(2-phosphoethyl)-thiazole from 5-(2-hydroxyethyl)-4-methylthiazole: step 1/1. Its function is as follows. Catalyzes the phosphorylation of the hydroxyl group of 4-methyl-5-beta-hydroxyethylthiazole (THZ). In Streptococcus pneumoniae (strain JJA), this protein is Hydroxyethylthiazole kinase 2.